We begin with the raw amino-acid sequence, 683 residues long: Methionine--tRNA ligase (683 aa).

The 'HIGH' region signature appears at 15–25; sequence PYANGSIHLGH. Zn(2+) is bound by residues cysteine 146, cysteine 149, cysteine 159, and cysteine 162. A 'KMSKS' region motif is present at residues 332-336; it reads KMSKS. Lysine 335 contributes to the ATP binding site. The tRNA-binding domain maps to 582 to 683; it reads DFAKVDLRIA…QGAQAGMRVM (102 aa).

It belongs to the class-I aminoacyl-tRNA synthetase family. MetG type 1 subfamily. In terms of assembly, homodimer. Zn(2+) serves as cofactor.

The protein localises to the cytoplasm. The catalysed reaction is tRNA(Met) + L-methionine + ATP = L-methionyl-tRNA(Met) + AMP + diphosphate. In terms of biological role, is required not only for elongation of protein synthesis but also for the initiation of all mRNA translation through initiator tRNA(fMet) aminoacylation. This is Methionine--tRNA ligase from Vibrio cholerae serotype O1 (strain ATCC 39315 / El Tor Inaba N16961).